An 89-amino-acid polypeptide reads, in one-letter code: Small ribosomal subunit protein uS15 (89 aa).

It belongs to the universal ribosomal protein uS15 family. As to quaternary structure, part of the 30S ribosomal subunit. Forms a bridge to the 50S subunit in the 70S ribosome, contacting the 23S rRNA.

Its function is as follows. One of the primary rRNA binding proteins, it binds directly to 16S rRNA where it helps nucleate assembly of the platform of the 30S subunit by binding and bridging several RNA helices of the 16S rRNA. Forms an intersubunit bridge (bridge B4) with the 23S rRNA of the 50S subunit in the ribosome. This is Small ribosomal subunit protein uS15 from Agrobacterium fabrum (strain C58 / ATCC 33970) (Agrobacterium tumefaciens (strain C58)).